Consider the following 54-residue polypeptide: Large ribosomal subunit protein bL33 (54 aa).

It belongs to the bacterial ribosomal protein bL33 family.

In Chloroflexus aurantiacus (strain ATCC 29366 / DSM 635 / J-10-fl), this protein is Large ribosomal subunit protein bL33.